Reading from the N-terminus, the 172-residue chain is Transcriptional activator protein (172 aa).

The short motif at 56–71 (KAQHRIAKHKAIRRRR) is the Nuclear localization signal element. The segment at 76–93 (CGCSIFYHIKCADHGFTH) is a zinc-finger region. Residues 119-172 (DHAGGRSSIHTDKDIPHPSQVQSQPQESTGSPQSIPELPSLDDIDSSFWDDIFK) are disordered. Positions 137–152 (SQVQSQPQESTGSPQS) are enriched in polar residues. The transactivation stretch occupies residues 158 to 172 (SLDDIDSSFWDDIFK).

This sequence belongs to the geminiviridae transcriptional activator protein family. As to quaternary structure, monomer. Homodimer. Homooligomer. Self-interaction correlates with nuclear localization and efficient activation of transcription. Monomers suppress local silencing by interacting with and inactivating host adenosine kinase 2 (ADK2) in the cytoplasm. Interacts with and inhibits host SNF1 kinase. Binds to ssDNA. In terms of processing, phosphorylated.

The protein resides in the host nucleus. Its subcellular location is the host cytoplasm. Its function is as follows. Strong activator of the late viral genes promoters. Enhances the expression of the capsid protein and nuclear shuttle protein. Acts as a suppressor of RNA-mediated gene silencing, also known as post-transcriptional gene silencing (PTGS), a mechanism of plant viral defense that limits the accumulation of viral RNAs. Suppresses the host RNA silencing by inhibiting adenosine kinase 2 (ADK2), a kinase involved in a general methylation pathway. Also suppresses the host basal defense by interacting with and inhibiting SNF1 kinase, a key regulator of cell metabolism implicated in innate antiviral defense. Determines pathogenicity. The sequence is that of Transcriptional activator protein from Bean golden yellow mosaic virus (isolate Puerto Rico-Japan) (BGYMV).